A 439-amino-acid chain; its full sequence is Elongation factor 1-alpha 2 (439 aa).

Residues 6 to 229 (KDHLNLVVIG…DEFKVPKRPI (224 aa)) enclose the tr-type G domain. The G1 stretch occupies residues 15-22 (GHVDSGKS). Residue 15–22 (GHVDSGKS) participates in GTP binding. The segment at 71 to 75 (GITIN) is G2. The segment at 92-95 (DAPG) is G3. GTP-binding positions include 92–96 (DAPGH) and 154–157 (NKMD). Residues 154–157 (NKMD) are G4. Positions 193-195 (SGF) are G5.

It belongs to the TRAFAC class translation factor GTPase superfamily. Classic translation factor GTPase family. EF-Tu/EF-1A subfamily.

It is found in the cytoplasm. Its function is as follows. This protein promotes the GTP-dependent binding of aminoacyl-tRNA to the A-site of ribosomes during protein biosynthesis. This chain is Elongation factor 1-alpha 2 (EFA2), found in Euplotes crassus.